The sequence spans 409 residues: Elongation factor Tu (409 aa).

Positions Lys-10–Glu-214 constitute a tr-type G domain. The tract at residues Gly-19–Thr-26 is G1. Gly-19 to Thr-26 is a binding site for GTP. Residue Thr-26 participates in Mg(2+) binding. The tract at residues Gly-60–Asn-64 is G2. Residues Asp-81–Gly-84 form a G3 region. GTP is bound by residues Asp-81–His-85 and Asn-136–Asp-139. Positions Asn-136 to Asp-139 are G4. The tract at residues Ser-174–Leu-176 is G5.

The protein belongs to the TRAFAC class translation factor GTPase superfamily. Classic translation factor GTPase family. EF-Tu/EF-1A subfamily. In terms of assembly, monomer.

The protein localises to the cytoplasm. It catalyses the reaction GTP + H2O = GDP + phosphate + H(+). Its function is as follows. GTP hydrolase that promotes the GTP-dependent binding of aminoacyl-tRNA to the A-site of ribosomes during protein biosynthesis. This Trichormus variabilis (strain ATCC 29413 / PCC 7937) (Anabaena variabilis) protein is Elongation factor Tu.